The following is a 108-amino-acid chain: Bublin coiled-coil protein (108 aa).

2 disordered regions span residues 1-23 and 67-108; these read MSGP…DDDF and RLEF…DEGS. Residues 25–73 adopt a coiled-coil conformation; sequence SEEYEAINSMLDQINSYLDDLEERNDSLNGKLHELMESNRQARLEFRAQ. Basic and acidic residues predominate over residues 99 to 108; it reads ENDKKIDEGS.

Belongs to the UPF0184 (EST00098) family.

The protein resides in the cell junction. It localises to the cytoplasm. Its subcellular location is the cytoskeleton. Essential for intermediate filament organization in intestinal cells, interacts with intermediate filament and regulates intestinal lumen morphology. This is Bublin coiled-coil protein (bbln) from Takifugu rubripes (Japanese pufferfish).